The following is a 122-amino-acid chain: Large ribosomal subunit protein uL18 (122 aa).

The protein belongs to the universal ribosomal protein uL18 family. In terms of assembly, part of the 50S ribosomal subunit; part of the 5S rRNA/L5/L18/L25 subcomplex. Contacts the 5S and 23S rRNAs.

This is one of the proteins that bind and probably mediate the attachment of the 5S RNA into the large ribosomal subunit, where it forms part of the central protuberance. The sequence is that of Large ribosomal subunit protein uL18 from Ruminiclostridium cellulolyticum (strain ATCC 35319 / DSM 5812 / JCM 6584 / H10) (Clostridium cellulolyticum).